The chain runs to 502 residues: Maturase K (502 aa).

It belongs to the intron maturase 2 family. MatK subfamily.

The protein localises to the plastid. The protein resides in the chloroplast. In terms of biological role, usually encoded in the trnK tRNA gene intron. Probably assists in splicing its own and other chloroplast group II introns. The chain is Maturase K from Arabis blepharophylla (Coast rock-cress).